The sequence spans 184 residues: mRNA transport regulator MTR2 (184 aa).

Residues 111–135 (KMGQDATVPIQPNNTGNRNRPNDMN) form a disordered region. The span at 120-129 (IQPNNTGNRN) shows a compositional bias: polar residues. A Phosphothreonine modification is found at threonine 125.

In terms of assembly, interacts with MEX67.

It localises to the nucleus. Its function is as follows. Affects mRNA transport from the nucleus to the cytoplasm. The polypeptide is mRNA transport regulator MTR2 (MTR2) (Saccharomyces cerevisiae (strain ATCC 204508 / S288c) (Baker's yeast)).